A 133-amino-acid chain; its full sequence is Cytochrome c-type biogenesis protein CcmE (133 aa).

Residues 1–7 (MKRKHKR) are Cytoplasmic-facing. A helical; Signal-anchor for type II membrane protein membrane pass occupies residues 8-28 (LLFIIVTFIIFGSSVVIVLNK). Topologically, residues 29–133 (LRSNISFFFT…NYKPGKYRAK (105 aa)) are periplasmic. Residues histidine 121 and tyrosine 125 each coordinate heme.

Belongs to the CcmE/CycJ family.

It is found in the cell inner membrane. Its function is as follows. Heme chaperone required for the biogenesis of c-type cytochromes. Transiently binds heme delivered by CcmC and transfers the heme to apo-cytochromes in a process facilitated by CcmF and CcmH. In Ehrlichia canis (strain Jake), this protein is Cytochrome c-type biogenesis protein CcmE.